Reading from the N-terminus, the 144-residue chain is Large ribosomal subunit protein uL16 (144 aa).

It belongs to the universal ribosomal protein uL16 family. In terms of assembly, part of the 50S ribosomal subunit.

Functionally, binds 23S rRNA and is also seen to make contacts with the A and possibly P site tRNAs. In Bacillus subtilis (strain 168), this protein is Large ribosomal subunit protein uL16.